A 347-amino-acid polypeptide reads, in one-letter code: Phosphoribosylformylglycinamidine cyclo-ligase (347 aa).

Belongs to the AIR synthase family.

It localises to the cytoplasm. It catalyses the reaction 2-formamido-N(1)-(5-O-phospho-beta-D-ribosyl)acetamidine + ATP = 5-amino-1-(5-phospho-beta-D-ribosyl)imidazole + ADP + phosphate + H(+). It functions in the pathway purine metabolism; IMP biosynthesis via de novo pathway; 5-amino-1-(5-phospho-D-ribosyl)imidazole from N(2)-formyl-N(1)-(5-phospho-D-ribosyl)glycinamide: step 2/2. In Yersinia pseudotuberculosis serotype O:1b (strain IP 31758), this protein is Phosphoribosylformylglycinamidine cyclo-ligase.